The sequence spans 101 residues: Large ribosomal subunit protein bL27 (101 aa).

A propeptide spanning residues 1–9 (MLLMNLQLF) is cleaved from the precursor.

It belongs to the bacterial ribosomal protein bL27 family. Post-translationally, the N-terminus is cleaved by ribosomal processing cysteine protease Prp.

The sequence is that of Large ribosomal subunit protein bL27 from Clostridium tetani (strain Massachusetts / E88).